The sequence spans 111 residues: Large ribosomal subunit protein uL22 (111 aa).

The protein belongs to the universal ribosomal protein uL22 family. Part of the 50S ribosomal subunit.

This protein binds specifically to 23S rRNA; its binding is stimulated by other ribosomal proteins, e.g. L4, L17, and L20. It is important during the early stages of 50S assembly. It makes multiple contacts with different domains of the 23S rRNA in the assembled 50S subunit and ribosome. Its function is as follows. The globular domain of the protein is located near the polypeptide exit tunnel on the outside of the subunit, while an extended beta-hairpin is found that lines the wall of the exit tunnel in the center of the 70S ribosome. The polypeptide is Large ribosomal subunit protein uL22 (Geotalea uraniireducens (strain Rf4) (Geobacter uraniireducens)).